We begin with the raw amino-acid sequence, 353 residues long: Rhodopsin (353 aa).

Residues M1 to A36 lie on the Extracellular side of the membrane. 2 N-linked (GlcNAc...) asparagine glycosylation sites follow: N2 and N15. The helical transmembrane segment at Y37–V61 threads the bilayer. At T62 to N73 the chain is on the cytoplasmic side. Residues Y74–Y96 form a helical membrane-spanning segment. The Extracellular segment spans residues T97–C110. C110 and C187 form a disulfide bridge. Residues N111–I133 traverse the membrane as a helical segment. Positions E134–W136 match the 'Ionic lock' involved in activated form stabilization motif. Topologically, residues E134 to H152 are cytoplasmic. Residues A153–V173 traverse the membrane as a helical segment. Topologically, residues G174–S202 are extracellular. N200 carries N-linked (GlcNAc...) asparagine glycosylation. Residues F203–G224 form a helical membrane-spanning segment. The Cytoplasmic segment spans residues R225–R252. Residues M253–Y274 traverse the membrane as a helical segment. The Extracellular portion of the chain corresponds to I275–V286. Residues F287–C308 traverse the membrane as a helical segment. K296 is subject to N6-(retinylidene)lysine. At L309 to A353 the chain is on the cytoplasmic side. Residues C322 and C323 are each lipidated (S-palmitoyl cysteine). The disordered stretch occupies residues E331 to A353. Positions A334 to A353 are enriched in low complexity.

The protein belongs to the G-protein coupled receptor 1 family. Opsin subfamily. Phosphorylated on some or all of the serine and threonine residues present in the C-terminal region. In terms of processing, contains one covalently linked retinal chromophore.

The protein localises to the membrane. The protein resides in the cell projection. It is found in the cilium. It localises to the photoreceptor outer segment. Functionally, photoreceptor required for image-forming vision at low light intensity. While most salt water fish species use retinal as chromophore, most freshwater fish use 3-dehydroretinal, or a mixture of retinal and 3-dehydroretinal. Light-induced isomerization of 11-cis to all-trans retinal triggers a conformational change that activates signaling via G-proteins. Subsequent receptor phosphorylation mediates displacement of the bound G-protein alpha subunit by arrestin and terminates signaling. This chain is Rhodopsin (rho), found in Diplodus annularis (Annular seabream).